The primary structure comprises 351 residues: Histidinol-phosphate aminotransferase 2 (351 aa).

An N6-(pyridoxal phosphate)lysine modification is found at K210.

It belongs to the class-II pyridoxal-phosphate-dependent aminotransferase family. Histidinol-phosphate aminotransferase subfamily. In terms of assembly, homodimer. Requires pyridoxal 5'-phosphate as cofactor.

The catalysed reaction is L-histidinol phosphate + 2-oxoglutarate = 3-(imidazol-4-yl)-2-oxopropyl phosphate + L-glutamate. It functions in the pathway amino-acid biosynthesis; L-histidine biosynthesis; L-histidine from 5-phospho-alpha-D-ribose 1-diphosphate: step 7/9. This is Histidinol-phosphate aminotransferase 2 (hisC2) from Rhizobium meliloti (strain 1021) (Ensifer meliloti).